The primary structure comprises 273 residues: 4-hydroxy-tetrahydrodipicolinate reductase (273 aa).

NAD(+) is bound by residues Gly12–Met17 and Glu38. NADP(+) is bound at residue Arg39. NAD(+) contacts are provided by residues Gly102–Thr104 and Ala126–Phe129. The active-site Proton donor/acceptor is His159. A (S)-2,3,4,5-tetrahydrodipicolinate-binding site is contributed by His160. Lys163 (proton donor) is an active-site residue. Gly169–Thr170 is a (S)-2,3,4,5-tetrahydrodipicolinate binding site.

Belongs to the DapB family. Homotetramer.

Its subcellular location is the cytoplasm. The enzyme catalyses (S)-2,3,4,5-tetrahydrodipicolinate + NAD(+) + H2O = (2S,4S)-4-hydroxy-2,3,4,5-tetrahydrodipicolinate + NADH + H(+). It catalyses the reaction (S)-2,3,4,5-tetrahydrodipicolinate + NADP(+) + H2O = (2S,4S)-4-hydroxy-2,3,4,5-tetrahydrodipicolinate + NADPH + H(+). It functions in the pathway amino-acid biosynthesis; L-lysine biosynthesis via DAP pathway; (S)-tetrahydrodipicolinate from L-aspartate: step 4/4. Its function is as follows. Catalyzes the conversion of 4-hydroxy-tetrahydrodipicolinate (HTPA) to tetrahydrodipicolinate. The chain is 4-hydroxy-tetrahydrodipicolinate reductase from Klebsiella pneumoniae subsp. pneumoniae (strain ATCC 700721 / MGH 78578).